A 293-amino-acid polypeptide reads, in one-letter code: Ribosomal protein L11 methyltransferase (293 aa).

S-adenosyl-L-methionine-binding residues include threonine 145, glycine 166, aspartate 188, and asparagine 230.

This sequence belongs to the methyltransferase superfamily. PrmA family.

It is found in the cytoplasm. The enzyme catalyses L-lysyl-[protein] + 3 S-adenosyl-L-methionine = N(6),N(6),N(6)-trimethyl-L-lysyl-[protein] + 3 S-adenosyl-L-homocysteine + 3 H(+). In terms of biological role, methylates ribosomal protein L11. This Shewanella baltica (strain OS195) protein is Ribosomal protein L11 methyltransferase.